Reading from the N-terminus, the 733-residue chain is DNA replication licensing factor Mcm5 (733 aa).

The MCM domain maps to 328–534 (IYERLSQSLA…RDITLAKHII (207 aa)). Residue Arg-368 coordinates ADP. Residues 509 to 512 (SRFD) carry the Arginine finger motif.

This sequence belongs to the MCM family. In terms of assembly, component of the Mcm2-7 complex. The complex forms a toroidal hexameric ring with the proposed subunit order Mcm2-Mcm6-Mcm4-Mcm7-Mcm3-Mcm5.

The protein localises to the nucleus. The protein resides in the cytoplasm. It is found in the cytosol. The enzyme catalyses ATP + H2O = ADP + phosphate + H(+). Functionally, acts as a component of the Mcm2-7 complex (Mcm complex) which is the putative replicative helicase essential for 'once per cell cycle' DNA replication initiation and elongation in eukaryotic cells. Core component of CDC45-MCM-GINS (CMG) helicase, the molecular machine that unwinds template DNA during replication, and around which the replisome is built. The active ATPase sites in the Mcm2-7 ring are formed through the interaction surfaces of two neighboring subunits such that a critical structure of a conserved arginine finger motif is provided in trans relative to the ATP-binding site of the Walker A box of the adjacent subunit. The six ATPase active sites, however, are likely to contribute differentially to the complex helicase activity. This is DNA replication licensing factor Mcm5 (Mcm5) from Drosophila melanogaster (Fruit fly).